The following is a 161-amino-acid chain: Blue copper protein 1a (161 aa).

Positions 1–23 (MASSRVVLILSISMVLLSSVAIA) are cleaved as a signal peptide. The 101-residue stretch at 24 to 124 (TDHIVGDDKG…QMKLVITVLA (101 aa)) folds into the Phytocyanin domain. His-64 serves as a coordination point for Cu cation. N-linked (GlcNAc...) asparagine glycosylation is present at Asn-70. Cys-77 and Cys-111 are joined by a disulfide. Cu cation-binding residues include Cys-105, His-110, and Met-116. A helical membrane pass occupies residues 141–161 (VVSSLFGVVMAIMVAIAVIFA).

It is found in the membrane. This Medicago truncatula (Barrel medic) protein is Blue copper protein 1a.